The chain runs to 330 residues: D-lactate dehydrogenase (330 aa).

NAD(+) is bound by residues 155–156 (RI), Asp-175, 206–207 (MP), Asn-212, 233–235 (MAR), and Asp-259. Arg-235 is a catalytic residue. Glu-264 is a catalytic residue. His-296 functions as the Proton donor in the catalytic mechanism.

The protein belongs to the D-isomer specific 2-hydroxyacid dehydrogenase family.

The catalysed reaction is (R)-lactate + NAD(+) = pyruvate + NADH + H(+). The protein is D-lactate dehydrogenase (ldhD) of Streptococcus agalactiae serotype V (strain ATCC BAA-611 / 2603 V/R).